A 314-amino-acid chain; its full sequence is Ferrochelatase (314 aa).

Fe cation-binding residues include histidine 188 and glutamate 269.

It belongs to the ferrochelatase family.

The protein localises to the cytoplasm. It carries out the reaction heme b + 2 H(+) = protoporphyrin IX + Fe(2+). It participates in porphyrin-containing compound metabolism; protoheme biosynthesis; protoheme from protoporphyrin-IX: step 1/1. Functionally, catalyzes the ferrous insertion into protoporphyrin IX. The sequence is that of Ferrochelatase from Campylobacter fetus subsp. fetus (strain 82-40).